Here is a 212-residue protein sequence, read N- to C-terminus: Large ribosomal subunit protein uL3 (212 aa).

Positions 133-156 (SMTHGSKNHRLPGSTGAGTTPGRV) are disordered.

This sequence belongs to the universal ribosomal protein uL3 family. In terms of assembly, part of the 50S ribosomal subunit. Forms a cluster with proteins L14 and L19.

Its function is as follows. One of the primary rRNA binding proteins, it binds directly near the 3'-end of the 23S rRNA, where it nucleates assembly of the 50S subunit. The polypeptide is Large ribosomal subunit protein uL3 (Crocosphaera subtropica (strain ATCC 51142 / BH68) (Cyanothece sp. (strain ATCC 51142))).